Here is a 79-residue protein sequence, read N- to C-terminus: UPF0180 protein BCAH820_1484 (79 aa).

The protein belongs to the UPF0180 family.

The protein is UPF0180 protein BCAH820_1484 of Bacillus cereus (strain AH820).